The chain runs to 229 residues: Small ribosomal subunit protein uS5 (229 aa).

Residues 61–124 (LEEQVLDVKL…AHAKLSLIKV (64 aa)) enclose the S5 DRBM domain.

This sequence belongs to the universal ribosomal protein uS5 family. Part of the 30S ribosomal subunit. Contacts protein S4.

Its function is as follows. With S4 and S12 plays an important role in translational accuracy. The sequence is that of Small ribosomal subunit protein uS5 from Methanococcus maripaludis (strain C7 / ATCC BAA-1331).